Here is a 549-residue protein sequence, read N- to C-terminus: Frizzled/smoothened-like sans CRD protein A (549 aa).

An N-terminal signal peptide occupies residues 1-22; the sequence is MKFNFKLILIILIINQILIINC. The Extracellular segment spans residues 23–89; it reads KENKILEIYK…EVNTLSLMIK (67 aa). A glycan (N-linked (GlcNAc...) asparagine) is linked at asparagine 63. Residues 90-110 traverse the membrane as a helical segment; sequence ITGTISFIASLILLLIYSPLI. At 111–119 the chain is on the cytoplasmic side; the sequence is NRMGYNRHT. Residues 120-140 form a helical membrane-spanning segment; sequence IGIFFLTFSVFLIMLTDIIYV. The Extracellular segment spans residues 141-162; that stretch reads HHGNDLICPQSHRYSRQNDSGC. Asparagine 158 carries an N-linked (GlcNAc...) asparagine glycan. The helical transmembrane segment at 163–183 threads the bilayer; it reads TITGILFQYGCIAAVLFWATL. Residues 184–198 are Cytoplasmic-facing; that stretch reads SLDLYLTLKKISTKK. A helical transmembrane segment spans residues 199–219; that stretch reads VEKWYLIILTLIALILTFVPL. The Extracellular portion of the chain corresponds to 220 to 241; the sequence is VKKSYGYLVTGLACWILDSTDQ. A helical membrane pass occupies residues 242–262; sequence IIFFWAPFTAILGIGSILIVL. At 263–287 the chain is on the cytoplasmic side; sequence VVYEIYKISKITKQNRGIFQSHIRP. Residues 288 to 308 form a helical membrane-spanning segment; it reads LLMVLFIFGQFLFILAFNALI. The Extracellular segment spans residues 309 to 346; it reads NNKYDEYSARMDSYIDCLFSSSSYSYLCRLKTFPFEME. Residues 347–367 form a helical membrane-spanning segment; the sequence is FIVLFFLRLIGIEVLIFYGFT. Residues 368–549 are Cytoplasmic-facing; the sequence is QQTKKILLHS…NNNSNNDENN (182 aa). Low complexity-rich tracts occupy residues 417–474 and 536–549; these read NNNN…SQQN and NKNI…DENN. Disordered stretches follow at residues 417–483 and 528–549; these read NNNN…QKLS and QYEE…DENN. The stretch at 432 to 475 forms a coiled coil; the sequence is NNLNNNLNNNNLNNNNNLNNLNNLNINNNLKNSQNNLNNSQQNE.

This sequence belongs to the G-protein coupled receptor Fz/Smo family.

The protein resides in the membrane. The chain is Frizzled/smoothened-like sans CRD protein A (fscA) from Dictyostelium discoideum (Social amoeba).